A 398-amino-acid chain; its full sequence is Serine/threonine-protein phosphatase 4 regulatory subunit 2-B (398 aa).

A disordered region spans residues 138–398; it reads SSEKNTSPSL…NAPEEPMEQD (261 aa). Polar residues-rich tracts occupy residues 139–149, 156–170, and 183–193; these read SEKNTSPSLNR, PSNSQSYTDRSNVNG, and TLSSPMNTNGL. Residues 197-211 show a composition bias toward basic and acidic residues; it reads MENKESDLQQKEKSL. Polar residues predominate over residues 278–294; sequence ASTSADKGKESCQTAQT. The segment covering 338–366 has biased composition (low complexity); that stretch reads SESACSLNSEEPNSAAAAASTAGTDSSEG.

Belongs to the PPP4R2 family. Serine/threonine-protein phosphatase 4 (PP4) occurs in different assemblies of the catalytic and one or more regulatory subunits.

Regulatory subunit of serine/threonine-protein phosphatase 4 (PP4). This chain is Serine/threonine-protein phosphatase 4 regulatory subunit 2-B (ppp4r2-b), found in Xenopus laevis (African clawed frog).